Reading from the N-terminus, the 228-residue chain is Cytochrome b-c1 complex subunit Rieske, mitochondrial (228 aa).

A mitochondrion-targeting transit peptide spans 1–26 (MLAKQFISKSLASSLRRLLPVSSTAS). The Mitochondrial matrix segment spans residues 27–63 (SLKGSMMTIPKFTSIRTYTDSPEMPDFSEYQTKSTGD). A helical membrane pass occupies residues 64–93 (RSRVISYAMVGTMGALTAAGAQATVHDFLA). Topologically, residues 94 to 228 (SWSASADVLA…TFEGSKIIIG (135 aa)) are mitochondrial intermembrane. The region spanning 139 to 227 (IQEANSVDIS…YTFEGSKIII (89 aa)) is the Rieske domain. Cysteine 172, histidine 174, cysteine 191, and histidine 194 together coordinate [2Fe-2S] cluster. Cysteine 177 and cysteine 193 form a disulfide bridge.

It belongs to the Rieske iron-sulfur protein family. Component of the ubiquinol-cytochrome c oxidoreductase (cytochrome b-c1 complex, complex III, CIII), a multisubunit enzyme composed of 3 respiratory subunits cytochrome b, cytochrome c1 and Rieske protein, 2 core protein subunits, and additional low-molecular weight protein subunits. The complex exists as an obligatory dimer and forms supercomplexes (SCs) in the inner mitochondrial membrane with cytochrome c oxidase (complex IV, CIV). It depends on [2Fe-2S] cluster as a cofactor.

The protein localises to the mitochondrion inner membrane. It catalyses the reaction a quinol + 2 Fe(III)-[cytochrome c](out) = a quinone + 2 Fe(II)-[cytochrome c](out) + 2 H(+)(out). Component of the ubiquinol-cytochrome c oxidoreductase, a multisubunit transmembrane complex that is part of the mitochondrial electron transport chain which drives oxidative phosphorylation. The respiratory chain contains 3 multisubunit complexes succinate dehydrogenase (complex II, CII), ubiquinol-cytochrome c oxidoreductase (cytochrome b-c1 complex, complex III, CIII) and cytochrome c oxidase (complex IV, CIV), that cooperate to transfer electrons derived from NADH and succinate to molecular oxygen, creating an electrochemical gradient over the inner membrane that drives transmembrane transport and the ATP synthase. The cytochrome b-c1 complex catalyzes electron transfer from ubiquinol to cytochrome c, linking this redox reaction to translocation of protons across the mitochondrial inner membrane, with protons being carried across the membrane as hydrogens on the quinol. In the process called Q cycle, 2 protons are consumed from the matrix, 4 protons are released into the intermembrane space and 2 electrons are passed to cytochrome c. The Rieske protein is a catalytic core subunit containing a [2Fe-2S] iron-sulfur cluster. It cycles between 2 conformational states during catalysis to transfer electrons from the quinol bound in the Q(0) site in cytochrome b to cytochrome c1. The protein is Cytochrome b-c1 complex subunit Rieske, mitochondrial (rip1) of Schizosaccharomyces pombe (strain 972 / ATCC 24843) (Fission yeast).